Consider the following 337-residue polypeptide: Protoheme IX farnesyltransferase (337 aa).

Residues 1 to 17 (MPFSISKDTVSNQTTHV) are compositionally biased toward polar residues. Positions 1 to 41 (MPFSISKDTVSNQTTHVATAPASQRPDPVETKVEQEQGRPR) are disordered. The segment covering 27 to 41 (DPVETKVEQEQGRPR) has biased composition (basic and acidic residues). The next 8 helical transmembrane spans lie at 59-79 (IIEL…HGVP), 81-101 (LGLV…ANVF), 130-150 (SALI…GFGA), 153-173 (LSAA…SMLL), 196-216 (WTAV…IVFW), 250-270 (VAIQ…VLWP), 271-291 (VAHM…VFIV), and 311-331 (PMGL…AIAV).

The protein belongs to the UbiA prenyltransferase family. Protoheme IX farnesyltransferase subfamily.

It is found in the cell membrane. It carries out the reaction heme b + (2E,6E)-farnesyl diphosphate + H2O = Fe(II)-heme o + diphosphate. Its pathway is porphyrin-containing compound metabolism; heme O biosynthesis; heme O from protoheme: step 1/1. Its function is as follows. Converts heme B (protoheme IX) to heme O by substitution of the vinyl group on carbon 2 of heme B porphyrin ring with a hydroxyethyl farnesyl side group. This is Protoheme IX farnesyltransferase from Cutibacterium acnes (strain DSM 16379 / KPA171202) (Propionibacterium acnes).